The chain runs to 523 residues: Tubulin-specific chaperone E (523 aa).

One can recognise a CAP-Gly domain in the interval G31–R75. 7 LRR repeats span residues L155–Q180, L181–E204, F209–A232, W235–K258, F260–N284, L285–E310, and F315–E337.

The protein belongs to the TBCE family.

It is found in the cytoplasm. Functionally, tubulin-folding protein which is required for the development of the neuronal microtubule network. Essential for the development and function of neuromuscular synapses. Likely to promote microtubule formation by acting in the negative regulation of the microtubule-severing protein spas. This Drosophila melanogaster (Fruit fly) protein is Tubulin-specific chaperone E.